A 284-amino-acid chain; its full sequence is Pantothenate synthetase (284 aa).

30-37 (MGALHDGH) is a binding site for ATP. Catalysis depends on His37, which acts as the Proton donor. A (R)-pantoate-binding site is contributed by Gln61. Gln61 serves as a coordination point for beta-alanine. 147-150 (GEKD) serves as a coordination point for ATP. Gln153 contributes to the (R)-pantoate binding site. ATP is bound by residues Val176 and 184 to 187 (KSSR).

It belongs to the pantothenate synthetase family. As to quaternary structure, homodimer.

Its subcellular location is the cytoplasm. It catalyses the reaction (R)-pantoate + beta-alanine + ATP = (R)-pantothenate + AMP + diphosphate + H(+). It functions in the pathway cofactor biosynthesis; (R)-pantothenate biosynthesis; (R)-pantothenate from (R)-pantoate and beta-alanine: step 1/1. Its function is as follows. Catalyzes the condensation of pantoate with beta-alanine in an ATP-dependent reaction via a pantoyl-adenylate intermediate. The chain is Pantothenate synthetase from Chloroherpeton thalassium (strain ATCC 35110 / GB-78).